The primary structure comprises 154 residues: Putative F-box protein At2g11200 (154 aa).

In terms of domain architecture, F-box spans 5–51 (TTAMSDLPRDLEEEVLSRVQLASLRAVRTTCKKWNRRLSKYRFTKKY).

The sequence is that of Putative F-box protein At2g11200 from Arabidopsis thaliana (Mouse-ear cress).